The following is a 110-amino-acid chain: Large ribosomal subunit protein uL22 (110 aa).

Belongs to the universal ribosomal protein uL22 family. In terms of assembly, part of the 50S ribosomal subunit.

Its function is as follows. This protein binds specifically to 23S rRNA; its binding is stimulated by other ribosomal proteins, e.g. L4, L17, and L20. It is important during the early stages of 50S assembly. It makes multiple contacts with different domains of the 23S rRNA in the assembled 50S subunit and ribosome. In terms of biological role, the globular domain of the protein is located near the polypeptide exit tunnel on the outside of the subunit, while an extended beta-hairpin is found that lines the wall of the exit tunnel in the center of the 70S ribosome. This is Large ribosomal subunit protein uL22 from Vibrio parahaemolyticus serotype O3:K6 (strain RIMD 2210633).